The chain runs to 307 residues: Deaminated glutathione amidase, chloroplastic/cytosolic (307 aa).

The N-terminal 36 residues, 1 to 36, are a transit peptide targeting the chloroplast; it reads MNAYSVSLDFTKPSLFTRITLSSQIPLTMATTVNKT. The region spanning 37–286 is the CN hydrolase domain; it reads VRVAAAQMTS…TGIVVADIDF (250 aa). E76 serves as the catalytic Proton acceptor. K147 serves as the catalytic Proton donor. The active-site Nucleophile is the C188.

It belongs to the nitrilase superfamily. NIT1/NIT2 family.

It is found in the plastid. Its subcellular location is the chloroplast. The protein resides in the cytoplasm. It carries out the reaction N-(4-oxoglutaryl)-L-cysteinylglycine + H2O = L-cysteinylglycine + 2-oxoglutarate. The enzyme catalyses N-(4-carboxy-4-oxobutanoyl)-L-ethylglycylglycine + H2O = N-(2-aminobutanoyl)glycine + 2-oxoglutarate. Catalyzes the hydrolysis of the amide bond in N-(4-oxoglutarate)-L-cysteinylglycine (deaminated glutathione), a metabolite repair reaction to dispose of the harmful deaminated glutathione. Possesses amidase activity toward deaminated ophthalmate in vitro. In Arabidopsis thaliana (Mouse-ear cress), this protein is Deaminated glutathione amidase, chloroplastic/cytosolic.